A 436-amino-acid polypeptide reads, in one-letter code: MSRTSDDIRKHLKVRRQKQRAILAMRWRCAQGGLEFEQLDTFYGAIRPYLCVAQFFGIMPLSNIRSRDPQDVKFKVRSIGLAVTGLFLLLGGMKTLVGANILFTEGLNAKNIVGLVFLIVGMVNWLNFVGFARSWSHIMLPWSSVDILMLFPPYKRGKRSLRSKVNVLALSVVVLAVGDHMLYYASGYCSYSMHILQCHTNHSRITFGLYLEKEFSDIMFIMPFNIFSMCYGFWLNGAFTFLWNFMDIFIVMTSIGLAQRFQQFAARVGALEGRHVPEALWYDIRRDHIRLCELASLVEASMSNIVFVSCANNVYVICNQALAIFTKLRHPINYVYFWYSLIFLLARTSLVFMTASKIHDASLLPLRSLYLVPSDGWTQEVQRFADQLTSEFVGLSGYRLFCLTRKSLFGMLATLVTYELMLLQIDAKSHKGLRCA.

At 1–78 (MSRTSDDIRK…PQDVKFKVRS (78 aa)) the chain is on the cytoplasmic side. The chain crosses the membrane as a helical span at residues 79 to 99 (IGLAVTGLFLLLGGMKTLVGA). The Extracellular portion of the chain corresponds to 100 to 111 (NILFTEGLNAKN). A helical membrane pass occupies residues 112–132 (IVGLVFLIVGMVNWLNFVGFA). At 133–164 (RSWSHIMLPWSSVDILMLFPPYKRGKRSLRSK) the chain is on the cytoplasmic side. Residues 165–185 (VNVLALSVVVLAVGDHMLYYA) form a helical membrane-spanning segment. Residues 186 to 214 (SGYCSYSMHILQCHTNHSRITFGLYLEKE) are Extracellular-facing. A glycan (N-linked (GlcNAc...) asparagine) is linked at N201. The chain crosses the membrane as a helical span at residues 215-235 (FSDIMFIMPFNIFSMCYGFWL). Residues 236–237 (NG) are Cytoplasmic-facing. A helical transmembrane segment spans residues 238-258 (AFTFLWNFMDIFIVMTSIGLA). Over 259-304 (QRFQQFAARVGALEGRHVPEALWYDIRRDHIRLCELASLVEASMSN) the chain is Extracellular. A helical transmembrane segment spans residues 305–325 (IVFVSCANNVYVICNQALAIF). The Cytoplasmic segment spans residues 326 to 334 (TKLRHPINY). Residues 335-355 (VYFWYSLIFLLARTSLVFMTA) form a helical membrane-spanning segment. At 356 to 436 (SKIHDASLLP…AKSHKGLRCA (81 aa)) the chain is on the extracellular side.

This sequence belongs to the insect chemoreceptor superfamily. Gustatory receptor (GR) family. Gr5a subfamily. As to expression, expressed in sweet sensing neurons of classical chemosensory sensilla, but also in two supersensitive neurons of atypical taste sensilla.

Its subcellular location is the cell membrane. Its function is as follows. One of the few identified sugar gustatory receptors identified so far with glucose being its primary ligand and which mediates acceptance behavior. The sequence is that of Gustatory receptor for sugar taste 61a (Gr61a) from Drosophila melanogaster (Fruit fly).